A 261-amino-acid chain; its full sequence is Ubiquinone biosynthesis O-methyltransferase (261 aa).

The segment at 1-22 (MTMQVDPSANSSAASSAAPGTT) is disordered. Residues 8–18 (SANSSAASSAA) show a composition bias toward low complexity. 4 residues coordinate S-adenosyl-L-methionine: Arg55, Gly86, Asp107, and Met149.

This sequence belongs to the methyltransferase superfamily. UbiG/COQ3 family.

The enzyme catalyses a 3-demethylubiquinol + S-adenosyl-L-methionine = a ubiquinol + S-adenosyl-L-homocysteine + H(+). It catalyses the reaction a 3-(all-trans-polyprenyl)benzene-1,2-diol + S-adenosyl-L-methionine = a 2-methoxy-6-(all-trans-polyprenyl)phenol + S-adenosyl-L-homocysteine + H(+). It participates in cofactor biosynthesis; ubiquinone biosynthesis. Its function is as follows. O-methyltransferase that catalyzes the 2 O-methylation steps in the ubiquinone biosynthetic pathway. This chain is Ubiquinone biosynthesis O-methyltransferase, found in Nitrobacter winogradskyi (strain ATCC 25391 / DSM 10237 / CIP 104748 / NCIMB 11846 / Nb-255).